Reading from the N-terminus, the 513-residue chain is Alpha-1B-glycoprotein (513 aa).

An N-terminal signal peptide occupies residues 1-20; it reads MSLLTTVLLLWGFTLGPGNA. 5 consecutive Ig-like V-type domains span residues 22-126, 127-219, 220-312, 313-415, and 416-513; these read WLDS…VTGK, EPLP…MSAT, QLPP…PVEL, MWSD…LRIN, and GPAP…VEGS. 3 N-linked (GlcNAc...) asparagine glycosylation sites follow: N44, N89, and N192. Cystine bridges form between C49–C96, C153–C195, C245–C292, C343–C392, and C441–C488. N-linked (GlcNAc...) asparagine glycans are attached at residues N369, N381, N389, and N485.

Interacts with CRISP3. Isoform 1 is expressed in normal liver. Isoform 2 is expressed in the regenerating liver after partial hepatectomy and at very low levels in the normal lung, brain and testis.

It is found in the secreted. The chain is Alpha-1B-glycoprotein from Rattus norvegicus (Rat).